We begin with the raw amino-acid sequence, 181 residues long: MSSLTVYHENQPEQPLKLLTHAEDIASTLAEVGVRFERWEAAAPIAAGASQDEVIAAYAHEIERLKRERGYITVDVVSLNSDHPQKAELRAKFLDEHRHGEDEVRFFVAGRGLFVLHIEEHVYAVLCERNDLISVPAGTRHWFDMGEHPHFVAVRLFNNPEGWVAQFTGDDIASRFPLLED.

Positions 97, 99, 103, and 141 each coordinate Fe(2+). Ni(2+) contacts are provided by H97, H99, E103, and H141.

This sequence belongs to the acireductone dioxygenase (ARD) family. As to quaternary structure, monomer. It depends on Fe(2+) as a cofactor. Requires Ni(2+) as cofactor.

It catalyses the reaction 1,2-dihydroxy-5-(methylsulfanyl)pent-1-en-3-one + O2 = 3-(methylsulfanyl)propanoate + CO + formate + 2 H(+). The enzyme catalyses 1,2-dihydroxy-5-(methylsulfanyl)pent-1-en-3-one + O2 = 4-methylsulfanyl-2-oxobutanoate + formate + 2 H(+). It functions in the pathway amino-acid biosynthesis; L-methionine biosynthesis via salvage pathway; L-methionine from S-methyl-5-thio-alpha-D-ribose 1-phosphate: step 5/6. Functionally, catalyzes 2 different reactions between oxygen and the acireductone 1,2-dihydroxy-3-keto-5-methylthiopentene (DHK-MTPene) depending upon the metal bound in the active site. Fe-containing acireductone dioxygenase (Fe-ARD) produces formate and 2-keto-4-methylthiobutyrate (KMTB), the alpha-ketoacid precursor of methionine in the methionine recycle pathway. Ni-containing acireductone dioxygenase (Ni-ARD) produces methylthiopropionate, carbon monoxide and formate, and does not lie on the methionine recycle pathway. In Pseudomonas aeruginosa (strain UCBPP-PA14), this protein is Acireductone dioxygenase.